Reading from the N-terminus, the 318-residue chain is Porphobilinogen deaminase (318 aa).

The residue at position 241 (C241) is an S-(dipyrrolylmethanemethyl)cysteine.

This sequence belongs to the HMBS family. As to quaternary structure, monomer. The cofactor is dipyrromethane.

The enzyme catalyses 4 porphobilinogen + H2O = hydroxymethylbilane + 4 NH4(+). Its pathway is porphyrin-containing compound metabolism; protoporphyrin-IX biosynthesis; coproporphyrinogen-III from 5-aminolevulinate: step 2/4. Tetrapolymerization of the monopyrrole PBG into the hydroxymethylbilane pre-uroporphyrinogen in several discrete steps. The chain is Porphobilinogen deaminase from Geobacter metallireducens (strain ATCC 53774 / DSM 7210 / GS-15).